The chain runs to 163 residues: MKDISRRRFVLGTGATVAAATLAGCNGNGNGNGNGNGNGEPDTPEGRADQFLTDNDALMYDGDITDETGQDEVVVVTGAGNNGFAFDPAAIRVDVGTTVTWEWTGDGGAHNVVSEPESDFEFESDRVDEEGFTFEQTFDDEGVALYVCTPHRAQGMYGAVIVE.

Positions 1–24 (MKDISRRRFVLGTGATVAAATLAG) are cleaved as a signal peptide. At Cys-25 the chain carries N-acetylcysteine. Cys-25 carries S-archaeol cysteine lipidation. The span at 26 to 38 (NGNGNGNGNGNGN) shows a compositional bias: gly residues. The interval 26 to 48 (NGNGNGNGNGNGNGEPDTPEGRA) is disordered. The 116-residue stretch at 48–163 (ADQFLTDNDA…QGMYGAVIVE (116 aa)) folds into the Plastocyanin-like domain. Residues His-110, Cys-148, His-151, and Met-156 each contribute to the Cu cation site.

It localises to the cell membrane. Functionally, electron donor. Binds one copper ion. In Natronomonas pharaonis (Natronobacterium pharaonis), this protein is Halocyanin (hcy).